Reading from the N-terminus, the 569-residue chain is Synaptotagmin-4 (569 aa).

Residues 1–21 form a helical membrane-spanning segment; the sequence is MGFLFGLFIGIAVSFGLVVAF. In terms of domain architecture, SMP-LTD spans 67–251; sequence QRQKLNWLNL…WPVRKIIPIL (185 aa). The interval 229-531 is phospholipid binding; the sequence is EETIRDAIED…KIGRVIMTLT (303 aa). C2 domains are found at residues 245–366 and 426–543; these read RKII…DIWL and TDMK…QEWF. Ca(2+)-binding residues include aspartate 459, aspartate 465, aspartate 514, aspartate 516, and aspartate 521.

The protein belongs to the synaptotagmin family. Ca(2+) is required as a cofactor.

It localises to the membrane. Its function is as follows. May be involved in membrane trafficking. This Arabidopsis thaliana (Mouse-ear cress) protein is Synaptotagmin-4 (SYT4).